The chain runs to 170 residues: MPLTWKDSGLRWYWVVVLVFLADQLSKQWVLANFDLFESVQLLPFFNFTYVRNYGAAFSFLSEAGGWQRWLFTIVAVGFSSLLTVWLRKQSASLLKLNLAYTLVIGGALGNLVDRLMHGFVVDFIDFYWGKSHYPAFNIADSAIFIGAVLIIWDSFFNSQSEQDKTEEVK.

A run of 3 helical transmembrane segments spans residues tryptophan 12–alanine 32, tryptophan 67–leucine 87, and serine 93–valine 113. Active-site residues include aspartate 123 and aspartate 141. A helical membrane pass occupies residues phenylalanine 137 to phenylalanine 157.

Belongs to the peptidase A8 family.

It localises to the cell inner membrane. It catalyses the reaction Release of signal peptides from bacterial membrane prolipoproteins. Hydrolyzes -Xaa-Yaa-Zaa-|-(S,diacylglyceryl)Cys-, in which Xaa is hydrophobic (preferably Leu), and Yaa (Ala or Ser) and Zaa (Gly or Ala) have small, neutral side chains.. Its pathway is protein modification; lipoprotein biosynthesis (signal peptide cleavage). This protein specifically catalyzes the removal of signal peptides from prolipoproteins. The polypeptide is Lipoprotein signal peptidase (Shewanella oneidensis (strain ATCC 700550 / JCM 31522 / CIP 106686 / LMG 19005 / NCIMB 14063 / MR-1)).